The following is a 173-amino-acid chain: MKKKEIVDDVTMKRAITRITYEIIERNKNLDKIVLAGIKTRGVYIAQRIQERLKQLENLDVPLIELDTKAYRDDVKSEQDTSLIPIEIDGTDVILVDDVLYTGRTIRAAIDNIVSHGRPARVGLAVLVDRGHRELPIRADYVGKNIPTSQSEEIEVLVTEVDGKDSVNIIDPN.

The PRPP-binding signature appears at 93–105; it reads VILVDDVLYTGRT.

It belongs to the purine/pyrimidine phosphoribosyltransferase family. PyrR subfamily. As to quaternary structure, homodimer and homohexamer; in equilibrium.

It catalyses the reaction UMP + diphosphate = 5-phospho-alpha-D-ribose 1-diphosphate + uracil. Regulates transcriptional attenuation of the pyrimidine nucleotide (pyr) operon by binding in a uridine-dependent manner to specific sites on pyr mRNA. This disrupts an antiterminator hairpin in the RNA and favors formation of a downstream transcription terminator, leading to a reduced expression of downstream genes. Functionally, also displays a weak uracil phosphoribosyltransferase activity which is not physiologically significant. The chain is Bifunctional protein PyrR from Streptococcus thermophilus (strain CNRZ 1066).